The sequence spans 1229 residues: ABC transporter B family member 22 (1229 aa).

6 helical membrane-spanning segments follow: residues 22-42 (MGLG…IFFI), 69-89 (VALL…GYCW), 145-167 (LPNF…IMLW), 171-193 (IVGF…ALIN), 251-271 (GIAI…TWYG), and 274-294 (MVMY…CITY). The ABC transmembrane type-1 1 domain occupies 22 to 311 (MGLGLIGAVG…GLSNLKYFSE (290 aa)). The 237-residue stretch at 346–582 (VQFKHVKFMY…VDGQYTSLVR (237 aa)) folds into the ABC transporter 1 domain. 381-388 (GGSGSGKS) provides a ligand contact to ATP. Asn-529 and Asn-594 each carry an N-linked (GlcNAc...) asparagine glycan. The next 2 helical transmembrane spans lie at 661–681 (ALYG…YAYA) and 703–723 (IYVL…IIQQ). The ABC transmembrane type-1 2 domain occupies 661–949 (ALYGCLSAVL…AGAMTMDLAK (289 aa)). Asn-758 carries N-linked (GlcNAc...) asparagine glycosylation. The next 4 membrane-spanning stretches (helical) occupy residues 782 to 800 (VSLL…TLGL), 807 to 823 (SIVM…CFYT), 885 to 908 (WLAG…NYWY), and 923 to 943 (FFEL…AGAM). One can recognise an ABC transporter 2 domain in the interval 984–1222 (IKFVNVDFAY…GPTGVYFSLV (239 aa)). An N-linked (GlcNAc...) asparagine glycan is attached at Asn-1004. 1019–1026 (GPSGSGKS) provides a ligand contact to ATP. A glycan (N-linked (GlcNAc...) asparagine) is linked at Asn-1157.

It belongs to the ABC transporter superfamily. ABCB family. Multidrug resistance exporter (TC 3.A.1.201) subfamily.

The protein resides in the membrane. This chain is ABC transporter B family member 22 (ABCB22), found in Arabidopsis thaliana (Mouse-ear cress).